The chain runs to 877 residues: Dystroglycan 1 (877 aa).

A signal peptide spans 1-29 (MRMSAGLSLLIPLWGRTFLLLLSVAVTQS). Residues 30-408 (RWPSEPSDAV…GHIRPTMTIP (379 aa)) are required for laminin recognition. The interval 49-71 (SMHSVLSDLHEAVPTVVGIPDGT) is O-glycosylated at one site. N141 carries N-linked (GlcNAc...) asparagine glycosylation. Residues C182 and C264 are joined by a disulfide bond. The mucin-like domain stretch occupies residues 316–468 (ATPTPVTAIG…PPTRIRTTTS (153 aa)). 3 O-linked (Man6P...) threonine glycosylation sites follow: T317, T319, and T379. Disordered stretches follow at residues 380-444 (PTLG…PVPR) and 458-480 (SPPT…QRPE). Residues 413-433 (PTAVATPPTPTTKNPRVSXPT) show a composition bias toward low complexity. The segment at 446-468 (TTKAPITRLETASPPTRIRTTTS) is O-glycosylated at seven sites with GalNAc. Residues 585 to 694 (RAPARFTAKF…MSIAVTGSGS (110 aa)) form the Peptidase S72 domain. Residues N623, N631, and N643 are each glycosylated (N-linked (GlcNAc...) asparagine). C651 and C695 are disulfide-bonded. Residues 706 to 717 (PKRVPSEAPPTE) are compositionally biased toward pro residues. A disordered region spans residues 706–727 (PKRVPSEAPPTEVPDRDPEKSS). Residues 718 to 727 (VPDRDPEKSS) are compositionally biased toward basic and acidic residues. The chain crosses the membrane as a helical span at residues 732 to 757 (YLHTVIPAVVVAAILLIAGIIAMICY). Positions 758–764 (RKKRKGK) match the Nuclear localization signal motif. Phosphothreonine is present on T772. A required for interaction with CAV3 region spans residues 801–877 (LQEEKAPLPP…YRSPPPYVPP (77 aa)). The segment at 805–877 (KAPLPPPEYP…YRSPPPYVPP (73 aa)) is disordered. Positions 814–828 (PNQSVPETTPLNQDT) are enriched in polar residues. Over residues 841–852 (NAPPYQPPPPFT) the composition is skewed to pro residues. The segment at 862–877 (PKNMTPYRSPPPYVPP) is required for binding DMD and UTRN. The PPXY motif signature appears at 871 to 874 (PPPY). Y874 bears the Phosphotyrosine; by SRC mark.

In terms of assembly, monomer. Heterodimer of alpha- and beta-dystroglycan subunits which are the central components of the dystrophin-glycoprotein complex. This complex then can form a dystrophin-associated glycoprotein complex (DGC) which is composed of three subcomplexes: a cytoplasmic complex comprised of DMD (or UTRN), DTNA and a number of syntrophins, such as SNTB1, SNTB2, SNTG1 and SNTG2, the transmembrane dystroglycan complex, and the sarcoglycan-sarcospan complex. Interacts (via the N-terminal of alphaDAG1) with LARGE1; the interaction enhances laminin binding. Interacts with SGCD. Interacts with AGR2 and AGR3. Interacts (betaDAG1) with DMD; the interaction is inhibited by phosphorylation on the PPXY motif. Interacts (betaDAG1, via its PPXY motif) with UTRN (via its WWW and ZZ domains); the interaction is inhibited by phosphorylation on the PPXY motif. Interacts (betaDAG1, via its phosphorylated PPXY motif) with the SH2 domain-containing proteins, FYN, CSK, NCK and SHC. Interacts (betaDAG1) with CAV3 (via a central WW-like domain); the interaction disrupts the binding of DMD. BetaDAG1 directly interacts with ANK3, but not with ANK2; this interaction does not interfere with DMD-binding and is required for retention at costameres. Identified in a dystroglycan complex that contains at least PRX, DRP2, UTRN, DMD and DAG1. Interacts with POMGNT1. BetaDAG1 interacts with CD93. Post-translationally, O-glycosylated. POMGNT1 catalyzes the initial addition of N-acetylglucosamine, giving rise to the GlcNAc(beta1-2)Man(alpha1-)O-Ser/Thr moiety and thus providing the necessary basis for the addition of further carbohydrate moieties. Heavily O-glycosylated comprising of up to two thirds of its mass and the carbohydrate composition differs depending on tissue type. Mucin-type O-glycosylation is important for ligand binding activity. O-mannosylation of alpha-DAG1 is found in high abundance in both brain and muscle where the most abundant glycan is Sia-alpha-2-3-Gal-beta-1-4-Glc-NAc-beta-1-2-Man. In muscle, glycosylation on Thr-317, Thr-319 and Thr-379 by a phosphorylated O-mannosyl glycan with the structure 2-(N-acetylamido)-2-deoxygalactosyl-beta-1,3-2-(N-acetylamido)-2-deoxyglucosyl-beta-1,4-6-phosphomannose is mediated by like-acetylglucosaminyltransferase (LARGE1) protein amd is required for laminin binding. O-glycosylated in the N-terminal region with a core 1 or possibly core 8 glycan. The brain form displays a unique glycosylation pattern which is absent in other tissues; this form shows enhanced binding to laminin LAMA5 compared to the skeletal muscle form. In terms of processing, N-glycosylated. Autolytic cleavage produces the alpha and beta subunits. In cutaneous cells, as well as in certain pathological conditions, shedding of beta-dystroglycan can occur releasing a peptide of about 30 kDa. Post-translationally, SRC-mediated phosphorylation of the PPXY motif of the beta subunit recruits SH2 domain-containing proteins, but inhibits binding to WWW domain-containing proteins, DMD and UTRN. This phosphorylation also inhibits nuclear entry.

It is found in the secreted. The protein localises to the extracellular space. The protein resides in the cell membrane. Its subcellular location is the cytoplasm. It localises to the cytoskeleton. It is found in the nucleus. The protein localises to the nucleoplasm. The protein resides in the sarcolemma. Its subcellular location is the postsynaptic cell membrane. Its function is as follows. The dystroglycan complex is involved in a number of processes including laminin and basement membrane assembly, sarcolemmal stability, cell survival, peripheral nerve myelination, nodal structure, cell migration, and epithelial polarization. In terms of biological role, extracellular peripheral glycoprotein that acts as a receptor for extracellular matrix proteins containing laminin-G domains. Receptor for laminin-2 (LAMA2) and agrin in peripheral nerve Schwann cells. Also acts as a receptor for laminin LAMA5. Functionally, transmembrane protein that plays important roles in connecting the extracellular matrix to the cytoskeleton. Acts as a cell adhesion receptor in both muscle and non-muscle tissues. Receptor for both DMD and UTRN and, through these interactions, scaffolds axin to the cytoskeleton. Also functions in cell adhesion-mediated signaling and implicated in cell polarity. This chain is Dystroglycan 1, found in Sus scrofa (Pig).